A 95-amino-acid polypeptide reads, in one-letter code: Protein TusB (95 aa).

It belongs to the DsrH/TusB family. Heterohexamer, formed by a dimer of trimers. The hexameric TusBCD complex contains 2 copies each of TusB, TusC and TusD. The TusBCD complex interacts with TusE.

Its subcellular location is the cytoplasm. In terms of biological role, part of a sulfur-relay system required for 2-thiolation of 5-methylaminomethyl-2-thiouridine (mnm(5)s(2)U) at tRNA wobble positions. In Escherichia coli O157:H7, this protein is Protein TusB.